The sequence spans 408 residues: Histidine--tRNA ligase (408 aa).

This sequence belongs to the class-II aminoacyl-tRNA synthetase family. In terms of assembly, homodimer.

The protein localises to the cytoplasm. The enzyme catalyses tRNA(His) + L-histidine + ATP = L-histidyl-tRNA(His) + AMP + diphosphate + H(+). The polypeptide is Histidine--tRNA ligase (Campylobacter lari (strain RM2100 / D67 / ATCC BAA-1060)).